The primary structure comprises 471 residues: Methionine aminopeptidase 2 (471 aa).

Disordered stretches follow at residues 16–80 (VVDD…IDRF) and 92–139 (CEHP…DFNR). A compositionally biased stretch (acidic residues) spans 32–47 (EDGDDNDDAVNEGEAV). Residues 52-65 (KKKKKKNKKKKKKG) are compositionally biased toward basic residues. A compositionally biased stretch (basic and acidic residues) spans 119 to 139 (AEERAKDDAKHGSDDPLDFNR). Residue histidine 224 participates in substrate binding. A divalent metal cation contacts are provided by aspartate 244, aspartate 255, and histidine 324. Histidine 332 serves as a coordination point for substrate. A divalent metal cation-binding residues include glutamate 357 and glutamate 452.

It belongs to the peptidase M24A family. Methionine aminopeptidase eukaryotic type 2 subfamily. The cofactor is Co(2+). It depends on Zn(2+) as a cofactor. Mn(2+) serves as cofactor. Fe(2+) is required as a cofactor.

The protein resides in the cytoplasm. It carries out the reaction Release of N-terminal amino acids, preferentially methionine, from peptides and arylamides.. Functionally, cotranslationally removes the N-terminal methionine from nascent proteins. The N-terminal methionine is often cleaved when the second residue in the primary sequence is small and uncharged (Met-Ala-, Cys, Gly, Pro, Ser, Thr, or Val). In Yarrowia lipolytica (strain CLIB 122 / E 150) (Yeast), this protein is Methionine aminopeptidase 2.